Reading from the N-terminus, the 64-residue chain is Large ribosomal subunit protein bL35 (64 aa).

The interval 19–41 (SGKVKRERMNGSHNLEHKNRKRT) is disordered. Residues 25–35 (ERMNGSHNLEH) are compositionally biased toward basic and acidic residues.

The protein belongs to the bacterial ribosomal protein bL35 family.

The chain is Large ribosomal subunit protein bL35 from Chlorobaculum tepidum (strain ATCC 49652 / DSM 12025 / NBRC 103806 / TLS) (Chlorobium tepidum).